An 852-amino-acid chain; its full sequence is Taste receptor type 1 member 3 (852 aa).

The first 20 residues, 1 to 20 (MLGPAVLGLSLWALLHPGTG), serve as a signal peptide directing secretion. The Extracellular segment spans residues 21–570 (APLCLSQQLR…FLAWGEPAVL (550 aa)). N-linked (GlcNAc...) asparagine glycans are attached at residues N85, N130, N264, N285, N380, N411, N432, and N475. The segment at 536-545 (IACTFCGQDE) is required for brazzein responsiveness. Residues 571–591 (LLLLLLSLALGLVLAALGLFV) form a helical membrane-spanning segment. Over 592–603 (HHRDSPLVQASG) the chain is Cytoplasmic. A helical membrane pass occupies residues 604–624 (GPLACFGLVCLGLVCLSVLLF). The Extracellular segment spans residues 625-639 (PGQPSPARCLAQQPL). The helical transmembrane segment at 640-660 (SHLPLTGCLSTLFLQAAEIFV) threads the bilayer. Topologically, residues 661-682 (ESELPLSWADRLSGCLRGPWAW) are cytoplasmic. Residues 683 to 703 (LVVLLAMLVEVALCTWYLVAF) traverse the membrane as a helical segment. Residues 704-729 (PPEVVTDWHMLPTEALVHCRTRSWVS) lie on the Extracellular side of the membrane. Residues 730 to 750 (FGLAHATNATLAFLCFLGTFL) form a helical membrane-spanning segment. Topologically, residues 751–762 (VRSQPGCYNRAR) are cytoplasmic. Residues 763-783 (GLTFAMLAYFITWVSFVPLLA) traverse the membrane as a helical segment. Residues 784–789 (NVQVVL) lie on the Extracellular side of the membrane. A helical membrane pass occupies residues 790-810 (RPAVQMGALLLCVLGILAAFH). Topologically, residues 811–852 (LPRCYLLMRQPGLNTPEFFLGGGPGDAQGQNDGNTGNQGKHE) are cytoplasmic.

The protein belongs to the G-protein coupled receptor 3 family. TAS1R subfamily. As to quaternary structure, forms homodimers or heterodimers with TAS1R1 and TAS1R2.

It localises to the cell membrane. Putative taste receptor. TAS1R1/TAS1R3 responds to the umami taste stimulus (the taste of monosodium glutamate). TAS1R2/TAS1R3 recognizes diverse natural and synthetic sweeteners. TAS1R3 is essential for the recognition and response to the disaccharide trehalose. Sequence differences within and between species can significantly influence the selectivity and specificity of taste responses. The chain is Taste receptor type 1 member 3 (TAS1R3) from Homo sapiens (Human).